The sequence spans 308 residues: Tryptophan 2,3-dioxygenase (308 aa).

Positions 1-35 are disordered; the sequence is MQPPGDNAPAGCPFSGAHAAQPAHEAPHVPGDAAG. Low complexity predominate over residues 17–30; sequence AHAAQPAHEAPHVP. Substrate is bound by residues 77-81, Y139, and R143; that span reads FIIQH. H266 is a heme binding site. Substrate is bound at residue T280.

This sequence belongs to the tryptophan 2,3-dioxygenase family. In terms of assembly, homotetramer. Requires heme as cofactor.

The enzyme catalyses L-tryptophan + O2 = N-formyl-L-kynurenine. The protein operates within amino-acid degradation; L-tryptophan degradation via kynurenine pathway; L-kynurenine from L-tryptophan: step 1/2. Functionally, heme-dependent dioxygenase that catalyzes the oxidative cleavage of the L-tryptophan (L-Trp) pyrrole ring and converts L-tryptophan to N-formyl-L-kynurenine. Catalyzes the oxidative cleavage of the indole moiety. The polypeptide is Tryptophan 2,3-dioxygenase (Burkholderia ambifaria (strain ATCC BAA-244 / DSM 16087 / CCUG 44356 / LMG 19182 / AMMD) (Burkholderia cepacia (strain AMMD))).